Here is a 616-residue protein sequence, read N- to C-terminus: Chaperone protein HscA homolog (616 aa).

Belongs to the heat shock protein 70 family.

In terms of biological role, chaperone involved in the maturation of iron-sulfur cluster-containing proteins. Has a low intrinsic ATPase activity which is markedly stimulated by HscB. In Aliivibrio fischeri (strain MJ11) (Vibrio fischeri), this protein is Chaperone protein HscA homolog.